Here is a 148-residue protein sequence, read N- to C-terminus: Endoribonuclease YbeY (148 aa).

3 residues coordinate Zn(2+): histidine 113, histidine 117, and histidine 123.

This sequence belongs to the endoribonuclease YbeY family. Zn(2+) is required as a cofactor.

The protein localises to the cytoplasm. Functionally, single strand-specific metallo-endoribonuclease involved in late-stage 70S ribosome quality control and in maturation of the 3' terminus of the 16S rRNA. The polypeptide is Endoribonuclease YbeY (Borrelia turicatae (strain 91E135)).